Consider the following 198-residue polypeptide: Nucleoid occlusion factor SlmA (198 aa).

In terms of domain architecture, HTH tetR-type spans 9–70 (RNRREEILQS…SLIEFIEDSL (62 aa)). Positions 33-52 (TTAKLAASVGVSEAALYRHF) form a DNA-binding region, H-T-H motif. A coiled-coil region spans residues 117-145 (EQDRLQGRINQLFERIEAQLRQVLREKKM).

The protein belongs to the nucleoid occlusion factor SlmA family. As to quaternary structure, homodimer. Interacts with FtsZ.

The protein localises to the cytoplasm. The protein resides in the nucleoid. Its function is as follows. Required for nucleoid occlusion (NO) phenomenon, which prevents Z-ring formation and cell division over the nucleoid. Acts as a DNA-associated cell division inhibitor that binds simultaneously chromosomal DNA and FtsZ, and disrupts the assembly of FtsZ polymers. SlmA-DNA-binding sequences (SBS) are dispersed on non-Ter regions of the chromosome, preventing FtsZ polymerization at these regions. This Cronobacter sakazakii (strain ATCC BAA-894) (Enterobacter sakazakii) protein is Nucleoid occlusion factor SlmA.